We begin with the raw amino-acid sequence, 220 residues long: Deoxyribose-phosphate aldolase (220 aa).

The Proton donor/acceptor role is filled by Asp-89. Lys-152 (schiff-base intermediate with acetaldehyde) is an active-site residue. Lys-181 acts as the Proton donor/acceptor in catalysis.

This sequence belongs to the DeoC/FbaB aldolase family. DeoC type 1 subfamily.

It is found in the cytoplasm. It catalyses the reaction 2-deoxy-D-ribose 5-phosphate = D-glyceraldehyde 3-phosphate + acetaldehyde. Its pathway is carbohydrate degradation; 2-deoxy-D-ribose 1-phosphate degradation; D-glyceraldehyde 3-phosphate and acetaldehyde from 2-deoxy-alpha-D-ribose 1-phosphate: step 2/2. Catalyzes a reversible aldol reaction between acetaldehyde and D-glyceraldehyde 3-phosphate to generate 2-deoxy-D-ribose 5-phosphate. The chain is Deoxyribose-phosphate aldolase from Enterococcus faecalis (strain ATCC 700802 / V583).